We begin with the raw amino-acid sequence, 131 residues long: Global transcriptional regulator Spx 2 (131 aa).

Residues C10 and C13 are joined by a disulfide bond.

This sequence belongs to the ArsC family. Spx subfamily. In terms of assembly, interacts with the C-terminal domain of the alpha subunit of the RNAP.

Its subcellular location is the cytoplasm. Functionally, global transcriptional regulator that plays a key role in stress response and exerts either positive or negative regulation of genes. Acts by interacting with the C-terminal domain of the alpha subunit of the RNA polymerase (RNAP). This interaction can enhance binding of RNAP to the promoter region of target genes and stimulate their transcription, or block interaction of RNAP with activator. In Bacillus anthracis, this protein is Global transcriptional regulator Spx 2.